A 122-amino-acid polypeptide reads, in one-letter code: Large ribosomal subunit protein uL14 (122 aa).

This sequence belongs to the universal ribosomal protein uL14 family. In terms of assembly, part of the 50S ribosomal subunit. Forms a cluster with proteins L3 and L19. In the 70S ribosome, L14 and L19 interact and together make contacts with the 16S rRNA in bridges B5 and B8.

In terms of biological role, binds to 23S rRNA. Forms part of two intersubunit bridges in the 70S ribosome. The polypeptide is Large ribosomal subunit protein uL14 (Cutibacterium acnes (strain DSM 16379 / KPA171202) (Propionibacterium acnes)).